The chain runs to 483 residues: Glutamyl-tRNA(Gln) amidotransferase subunit A (483 aa).

Residues Lys76 and Ser151 each act as charge relay system in the active site. Residue Ser175 is the Acyl-ester intermediate of the active site.

This sequence belongs to the amidase family. GatA subfamily. Heterotrimer of A, B and C subunits.

The catalysed reaction is L-glutamyl-tRNA(Gln) + L-glutamine + ATP + H2O = L-glutaminyl-tRNA(Gln) + L-glutamate + ADP + phosphate + H(+). In terms of biological role, allows the formation of correctly charged Gln-tRNA(Gln) through the transamidation of misacylated Glu-tRNA(Gln) in organisms which lack glutaminyl-tRNA synthetase. The reaction takes place in the presence of glutamine and ATP through an activated gamma-phospho-Glu-tRNA(Gln). This Nitrosospira multiformis (strain ATCC 25196 / NCIMB 11849 / C 71) protein is Glutamyl-tRNA(Gln) amidotransferase subunit A.